The sequence spans 122 residues: Putative iron-sulfur cluster insertion protein ErpA (122 aa).

Positions 50, 114, and 116 each coordinate iron-sulfur cluster.

This sequence belongs to the HesB/IscA family. As to quaternary structure, homodimer. Iron-sulfur cluster is required as a cofactor.

In terms of biological role, required for insertion of 4Fe-4S clusters. In Bordetella petrii (strain ATCC BAA-461 / DSM 12804 / CCUG 43448), this protein is Putative iron-sulfur cluster insertion protein ErpA.